Here is a 79-residue protein sequence, read N- to C-terminus: Exodeoxyribonuclease 7 small subunit (79 aa).

This sequence belongs to the XseB family. As to quaternary structure, heterooligomer composed of large and small subunits.

The protein resides in the cytoplasm. The enzyme catalyses Exonucleolytic cleavage in either 5'- to 3'- or 3'- to 5'-direction to yield nucleoside 5'-phosphates.. Its function is as follows. Bidirectionally degrades single-stranded DNA into large acid-insoluble oligonucleotides, which are then degraded further into small acid-soluble oligonucleotides. This is Exodeoxyribonuclease 7 small subunit from Lactococcus lactis subsp. cremoris (strain MG1363).